The primary structure comprises 58 residues: Curromycin resistance protein (58 aa).

Residues 1 to 37 are disordered; it reads MSVVALGATSITPPHGPESQGRPFPARGPVRPSARAR. A compositionally biased stretch (low complexity) spans 25-37; it reads PARGPVRPSARAR.

In Streptomyces hygroscopicus, this protein is Curromycin resistance protein (cre).